The chain runs to 314 residues: MKRAPTKQPAKPAARGGERAQGRVIAAHGRHYIVAPADGGSMLQCFPRGKKSEVAVGDRVAYERTSADQGVIVEIGERRNLLYRSDQFKSKLFAANLDQLLIVLATEPYFSEDLLGRALIAAEANELKPIVVLNKIDVEAALPVARERLAPYRALGYDVLELSVKGAPDDARAQLAPRLAGHSTILLGQSGMGKSTLVNLLVPDAEAATREISAALNSGRHTTTFTRLYPLQDGGALIDSPGFQEFGLYHLTEGRLERAFPEFRPLLAHCRFYNCHHLHEPGCAILEALADGRIAPTRHALYAQLVHEASQIVR.

The tract at residues 1–20 (MKRAPTKQPAKPAARGGERA) is disordered. One can recognise a CP-type G domain in the interval 85–246 (SDQFKSKLFA…LIDSPGFQEF (162 aa)). Residues 134–137 (NKID) and 188–196 (GQSGMGKST) contribute to the GTP site. Positions 270, 275, 277, and 283 each coordinate Zn(2+).

The protein belongs to the TRAFAC class YlqF/YawG GTPase family. RsgA subfamily. In terms of assembly, monomer. Associates with 30S ribosomal subunit, binds 16S rRNA. Requires Zn(2+) as cofactor.

It is found in the cytoplasm. In terms of biological role, one of several proteins that assist in the late maturation steps of the functional core of the 30S ribosomal subunit. Helps release RbfA from mature subunits. May play a role in the assembly of ribosomal proteins into the subunit. Circularly permuted GTPase that catalyzes slow GTP hydrolysis, GTPase activity is stimulated by the 30S ribosomal subunit. The chain is Small ribosomal subunit biogenesis GTPase RsgA from Burkholderia pseudomallei (strain K96243).